Here is a 314-residue protein sequence, read N- to C-terminus: Coiled-coil domain-containing protein 42 like-2 (314 aa).

Coiled-coil stretches lie at residues 34-139 (RLLE…RQEK) and 175-233 (NKLL…WESR).

The protein belongs to the CFAP73 family.

The protein is Coiled-coil domain-containing protein 42 like-2 of Xenopus laevis (African clawed frog).